The following is a 354-amino-acid chain: Uroporphyrinogen decarboxylase (354 aa).

Residues 27–31 (RQAGR), Asp-77, Tyr-154, Thr-209, and His-327 contribute to the substrate site.

Belongs to the uroporphyrinogen decarboxylase family. Homodimer.

The protein resides in the cytoplasm. It carries out the reaction uroporphyrinogen III + 4 H(+) = coproporphyrinogen III + 4 CO2. Its pathway is porphyrin-containing compound metabolism; protoporphyrin-IX biosynthesis; coproporphyrinogen-III from 5-aminolevulinate: step 4/4. In terms of biological role, catalyzes the decarboxylation of four acetate groups of uroporphyrinogen-III to yield coproporphyrinogen-III. In Klebsiella pneumoniae subsp. pneumoniae (strain ATCC 700721 / MGH 78578), this protein is Uroporphyrinogen decarboxylase.